We begin with the raw amino-acid sequence, 509 residues long: GMP synthase [glutamine-hydrolyzing] (509 aa).

One can recognise a Glutamine amidotransferase type-1 domain in the interval 4 to 194; sequence KVIVLDFGGQ…LYEICGLTPD (191 aa). Cys-81 serves as the catalytic Nucleophile. Catalysis depends on residues His-168 and Glu-170. Positions 195–384 constitute a GMPS ATP-PPase domain; sequence WTMESFAQKA…LGLPESIVWR (190 aa). 222–228 is an ATP binding site; sequence SGGVDSS.

In terms of assembly, homodimer.

It catalyses the reaction XMP + L-glutamine + ATP + H2O = GMP + L-glutamate + AMP + diphosphate + 2 H(+). It participates in purine metabolism; GMP biosynthesis; GMP from XMP (L-Gln route): step 1/1. Functionally, catalyzes the synthesis of GMP from XMP. The protein is GMP synthase [glutamine-hydrolyzing] of Carboxydothermus hydrogenoformans (strain ATCC BAA-161 / DSM 6008 / Z-2901).